The following is an 88-amino-acid chain: Small ribosomal subunit protein bS20 (88 aa).

It belongs to the bacterial ribosomal protein bS20 family.

In terms of biological role, binds directly to 16S ribosomal RNA. This Rhodospirillum rubrum (strain ATCC 11170 / ATH 1.1.1 / DSM 467 / LMG 4362 / NCIMB 8255 / S1) protein is Small ribosomal subunit protein bS20.